Reading from the N-terminus, the 463-residue chain is Nitrogenase iron-molybdenum cofactor biosynthesis protein NifE (463 aa).

It belongs to the NifD/NifK/NifE/NifN family.

It participates in cofactor biosynthesis; Fe-Mo cofactor biosynthesis. This protein may play a role in the biosynthesis of the prosthetic group of nitrogenase (FeMo cofactor). The polypeptide is Nitrogenase iron-molybdenum cofactor biosynthesis protein NifE (nifE2) (Methanosarcina barkeri).